Reading from the N-terminus, the 217-residue chain is Large ribosomal subunit protein bL25 (217 aa).

Low complexity predominate over residues 195–211; that stretch reads PAEGAAAAPAKGAAKGA. Residues 195–217 form a disordered region; it reads PAEGAAAAPAKGAAKGAAKGGKK.

Belongs to the bacterial ribosomal protein bL25 family. CTC subfamily. In terms of assembly, part of the 50S ribosomal subunit; part of the 5S rRNA/L5/L18/L25 subcomplex. Contacts the 5S rRNA. Binds to the 5S rRNA independently of L5 and L18.

Its function is as follows. This is one of the proteins that binds to the 5S RNA in the ribosome where it forms part of the central protuberance. The sequence is that of Large ribosomal subunit protein bL25 from Acidiphilium cryptum (strain JF-5).